Consider the following 351-residue polypeptide: MTIAAGRMPQRGWFDVLDDWLKRDRFVFVGWSGILLLPTAYLSIGGWLTGTTFVTSWYTHGIASSYLEGCNFLTAAVSTPADAMGHSLLLLWGPEAQGDFVRWCQLGGLWAFVALHGAFALIGFMLRQFEIARLVGIRPYNAIAFSGPIAVFVSVFLMYPLGQSSWFFAPSFGVAAIFRFLLFLQGFHNWTLNPFHMMGVAGILGGALLCAIHGATVENTLFEDGEQSNTFKAFEPTQEEETYSMVTANRFWSQIFGIAFSNKRWLHFFMLFVPVMGLWTSAIGIIGLALNLRAYDFVSQEIRAAEDPEFETFYTKNILLNEGLRAWMAPADQPHENFVFPEEVLPRGNAL.

Residues 39 to 59 traverse the membrane as a helical segment; that stretch reads TAYLSIGGWLTGTTFVTSWYT. Chlorophyll a is bound at residue H116. The helical transmembrane segment at 123 to 139 threads the bilayer; it reads GFMLRQFEIARLVGIRP. Residues Q128 and N141 each contribute to the pheophytin a site. A helical transmembrane segment spans residues 151-164; the sequence is VFVSVFLMYPLGQS. Position 196 (H196) interacts with chlorophyll a. The helical transmembrane segment at 206 to 226 threads the bilayer; the sequence is GALLCAIHGATVENTLFEDGE. The a plastoquinone site is built by H213 and F260. Residue H213 coordinates Fe cation. H267 lines the Fe cation pocket. The helical transmembrane segment at 277–293 threads the bilayer; the sequence is GLWTSAIGIIGLALNLR.

Belongs to the reaction center PufL/M/PsbA/D family. In terms of assembly, PSII is composed of 1 copy each of membrane proteins PsbA, PsbB, PsbC, PsbD, PsbE, PsbF, PsbH, PsbI, PsbJ, PsbK, PsbL, PsbM, PsbT, PsbX, PsbY, PsbZ, Psb30/Ycf12, peripheral proteins PsbO, CyanoQ (PsbQ), PsbU, PsbV and a large number of cofactors. It forms dimeric complexes. It depends on The D1/D2 heterodimer binds P680, chlorophylls that are the primary electron donor of PSII, and subsequent electron acceptors. It shares a non-heme iron and each subunit binds pheophytin, quinone, additional chlorophylls, carotenoids and lipids. There is also a Cl(-1) ion associated with D1 and D2, which is required for oxygen evolution. The PSII complex binds additional chlorophylls, carotenoids and specific lipids. as a cofactor.

The protein resides in the cellular thylakoid membrane. It carries out the reaction 2 a plastoquinone + 4 hnu + 2 H2O = 2 a plastoquinol + O2. Photosystem II (PSII) is a light-driven water:plastoquinone oxidoreductase that uses light energy to abstract electrons from H(2)O, generating O(2) and a proton gradient subsequently used for ATP formation. It consists of a core antenna complex that captures photons, and an electron transfer chain that converts photonic excitation into a charge separation. The D1/D2 (PsbA/PsbD) reaction center heterodimer binds P680, the primary electron donor of PSII as well as several subsequent electron acceptors. D2 is needed for assembly of a stable PSII complex. In Synechococcus sp. (strain CC9311), this protein is Photosystem II D2 protein.